Here is a 90-residue protein sequence, read N- to C-terminus: uncharacterized protein (90 aa).

The protein resides in the mitochondrion. This is an uncharacterized protein from Ascobolus immersus.